A 238-amino-acid polypeptide reads, in one-letter code: Probable transcriptional regulatory protein SAB0618 (238 aa).

The protein belongs to the TACO1 family. YeeN subfamily.

It is found in the cytoplasm. This chain is Probable transcriptional regulatory protein SAB0618, found in Staphylococcus aureus (strain bovine RF122 / ET3-1).